A 272-amino-acid polypeptide reads, in one-letter code: HMP-PP phosphatase (272 aa).

Asp-8 functions as the Nucleophile in the catalytic mechanism. Mg(2+) contacts are provided by Asp-8, Asp-10, and Asp-212.

The protein belongs to the HAD-like hydrolase superfamily. Cof family. Mg(2+) serves as cofactor.

It catalyses the reaction 4-amino-2-methyl-5-(diphosphooxymethyl)pyrimidine + H2O = 4-amino-2-methyl-5-(phosphooxymethyl)pyrimidine + phosphate + H(+). Its function is as follows. Catalyzes the hydrolysis of 4-amino-2-methyl-5-hydroxymethylpyrimidine pyrophosphate (HMP-PP) to 4-amino-2-methyl-5-hydroxymethylpyrimidine phosphate (HMP-P). The sequence is that of HMP-PP phosphatase from Salmonella newport (strain SL254).